The chain runs to 430 residues: Adenylosuccinate synthetase (430 aa).

GTP is bound by residues 12–18 (GDEGKGK) and 40–42 (GHT). Aspartate 13 (proton acceptor) is an active-site residue. 2 residues coordinate Mg(2+): aspartate 13 and glycine 40. IMP-binding positions include 13–16 (DEGK), 38–41 (NAGH), threonine 128, arginine 142, glutamine 223, threonine 238, and arginine 302. Histidine 41 functions as the Proton donor in the catalytic mechanism. 298 to 304 (TTTGRPR) provides a ligand contact to substrate. Residues arginine 304, 330–332 (SID), and 412–414 (SVG) each bind GTP.

Belongs to the adenylosuccinate synthetase family. As to quaternary structure, homodimer. It depends on Mg(2+) as a cofactor.

The protein resides in the cytoplasm. The catalysed reaction is IMP + L-aspartate + GTP = N(6)-(1,2-dicarboxyethyl)-AMP + GDP + phosphate + 2 H(+). The protein operates within purine metabolism; AMP biosynthesis via de novo pathway; AMP from IMP: step 1/2. Functionally, plays an important role in the de novo pathway of purine nucleotide biosynthesis. Catalyzes the first committed step in the biosynthesis of AMP from IMP. This chain is Adenylosuccinate synthetase, found in Enterococcus faecalis (strain ATCC 700802 / V583).